Here is a 333-residue protein sequence, read N- to C-terminus: Flap endonuclease 1 (333 aa).

Residues 1–99 (MGVALREVLT…ETIESRREVR (99 aa)) are N-domain. The Mg(2+) site is built by aspartate 28, aspartate 81, glutamate 153, glutamate 155, aspartate 174, aspartate 176, and aspartate 235. Residues 117–256 (EAYKQARASS…TALKIVKKDG (140 aa)) form an I-domain region. An interaction with PCNA region spans residues 325–333 (GQKTLDRWF).

Belongs to the XPG/RAD2 endonuclease family. FEN1 subfamily. In terms of assembly, interacts with PCNA. PCNA stimulates the nuclease activity without altering cleavage specificity. Mg(2+) serves as cofactor.

In terms of biological role, structure-specific nuclease with 5'-flap endonuclease and 5'-3' exonuclease activities involved in DNA replication and repair. During DNA replication, cleaves the 5'-overhanging flap structure that is generated by displacement synthesis when DNA polymerase encounters the 5'-end of a downstream Okazaki fragment. Binds the unpaired 3'-DNA end and kinks the DNA to facilitate 5' cleavage specificity. Cleaves one nucleotide into the double-stranded DNA from the junction in flap DNA, leaving a nick for ligation. Also involved in the base excision repair (BER) pathway. Acts as a genome stabilization factor that prevents flaps from equilibrating into structures that lead to duplications and deletions. Also possesses 5'-3' exonuclease activity on nicked or gapped double-stranded DNA. The sequence is that of Flap endonuclease 1 from Methanosphaerula palustris (strain ATCC BAA-1556 / DSM 19958 / E1-9c).